A 163-amino-acid polypeptide reads, in one-letter code: Peptide deformylase (163 aa).

Fe cation is bound by residues C91 and H133. E134 is an active-site residue. H137 is a Fe cation binding site.

The protein belongs to the polypeptide deformylase family. It depends on Fe(2+) as a cofactor.

The catalysed reaction is N-terminal N-formyl-L-methionyl-[peptide] + H2O = N-terminal L-methionyl-[peptide] + formate. Removes the formyl group from the N-terminal Met of newly synthesized proteins. Requires at least a dipeptide for an efficient rate of reaction. N-terminal L-methionine is a prerequisite for activity but the enzyme has broad specificity at other positions. This is Peptide deformylase from Lachnoclostridium phytofermentans (strain ATCC 700394 / DSM 18823 / ISDg) (Clostridium phytofermentans).